The sequence spans 348 residues: MALVPTPVVNEGPMFAEVDMGDNSSTPTVRATVVQASTIFYDTPATLDKAERLLAEAASYGAQLVVFPEAFIGGYPRGSTFGVSIGNRTAKGKEEFRKYHASAIDVPGPEVDRLAAMAGKYKVYLVMGVIERDGYTLYCTVLFFDSQGHYLGKHRKIMPTALERIIWGFGDGSTIPVYDTPLGKIGAAICWENRMPLLRTAMYAKGIEIYCAPTADSRDVWQASMTHIALEGGCFVLSANQFCRRKDYPPPPEYVFSGTEDLTPDSIVCAGGSVIISPSGAVLAGPNYEGEALISADLDLGEIARAKFDFDVVGHYARPEVLSLIVRDHAVSPVSFTSTSSKAESSPK.

The 272-residue stretch at 29 to 300 (VRATVVQAST…EALISADLDL (272 aa)) folds into the CN hydrolase domain. Glu69 acts as the Proton acceptor in catalysis. Residue Lys156 is the Proton donor of the active site. The Nucleophile role is filled by Cys190.

This sequence belongs to the carbon-nitrogen hydrolase superfamily. Nitrilase family. Expressed in roots, stems, cotyledons, leaves and flowers.

It catalyses the reaction a nitrile + 2 H2O = a carboxylate + NH4(+). The enzyme catalyses 3-cyano-L-alanine + 2 H2O = L-aspartate + NH4(+). In terms of biological role, highly specific for beta-cyano-L-alanine (Ala(CN)). Low activity with 3-phenylpropionitrile (PPN). Not associated with auxin production but may be involved in cyanide detoxification. In Nicotiana tabacum (Common tobacco), this protein is Bifunctional nitrilase/nitrile hydratase NIT4B (NIT4B).